A 335-amino-acid chain; its full sequence is Ketol-acid reductoisomerase (NAD(P)(+)) (335 aa).

One can recognise a KARI N-terminal Rossmann domain in the interval 5-185; it reads AKIYTDKDTT…GGTRAGAIET (181 aa). NADP(+) is bound by residues 28–31, arginine 52, serine 56, and 86–89; these read YGSQ and DMAQ. Histidine 111 is a catalytic residue. Glycine 137 serves as a coordination point for NADP(+). A KARI C-terminal knotted domain is found at 186 to 331; it reads TFKEETETDL…RRLKEIIERG (146 aa). The Mg(2+) site is built by aspartate 194, glutamate 198, glutamate 230, and glutamate 234. Serine 255 contacts substrate. Positions 301-335 are disordered; the sequence is GSPTLSKGLEEMDKSLEEQTGRRLKEIIERGRPKS. Residues 308-335 are compositionally biased toward basic and acidic residues; it reads GLEEMDKSLEEQTGRRLKEIIERGRPKS.

Belongs to the ketol-acid reductoisomerase family. Mg(2+) serves as cofactor.

It catalyses the reaction (2R)-2,3-dihydroxy-3-methylbutanoate + NAD(+) = (2S)-2-acetolactate + NADH + H(+). It carries out the reaction (2R)-2,3-dihydroxy-3-methylbutanoate + NADP(+) = (2S)-2-acetolactate + NADPH + H(+). It participates in amino-acid biosynthesis; L-isoleucine biosynthesis; L-isoleucine from 2-oxobutanoate: step 2/4. The protein operates within amino-acid biosynthesis; L-valine biosynthesis; L-valine from pyruvate: step 2/4. In terms of biological role, involved in the biosynthesis of branched-chain amino acids (BCAA). Catalyzes an alkyl-migration followed by a ketol-acid reduction of (S)-2-acetolactate (S2AL) to yield (R)-2,3-dihydroxy-isovalerate. In the isomerase reaction, S2AL is rearranged via a Mg-dependent methyl migration to produce 3-hydroxy-3-methyl-2-ketobutyrate (HMKB). In the reductase reaction, this 2-ketoacid undergoes a metal-dependent reduction by NADPH or NADH to yield (R)-2,3-dihydroxy-isovalerate. In Metallosphaera sedula (strain ATCC 51363 / DSM 5348 / JCM 9185 / NBRC 15509 / TH2), this protein is Ketol-acid reductoisomerase (NAD(P)(+)).